Reading from the N-terminus, the 402-residue chain is MATQASVEWIFNVAGSAASSSLDKAIKDAGGSENFSKYVITKFYDNYKDCIDDSGVYNACIGRAKTIDKALNDPKVAERNEEWYTNVATISRLDLELAELKLMLSNLGIKREERVLNSMFSVVREKGRSSNVIMMKQNAVKMIEEGKLKIKVERNETYTESLKNKIEELECIIDAFEKGKDITIDLDAMNGEVKLDGNSCSYNSTAALVSTILGTPIKMYNESGQPLFDVGNYMNPKNIIEKMIELEIPIFKSDYRNNESPDFDSWNERSNLKIVSVNDCHAICIFKFENNWWCFDDGRLKKHNGAGYPLIVANSKFQIDKILISGDIELNPGPDILVTLNDYITKYQLKLECTFDIFLEDDGSITYTCYMKLESAEAIGSGRSKKEAKRIAAYDILDQLGI.

The region spanning 334–402 is the DRBM domain; that stretch reads PDILVTLNDY…AYDILDQLGI (69 aa).

This sequence belongs to the rotavirus NSP3 family.

It is found in the host cytoplasm. In terms of biological role, may play a role in stimulating the translation of viral mRNAs. The sequence is that of Non-structural protein 3 from Rotavirus C (isolate RVC/Human/United Kingdom/Bristol/1989) (RV-C).